The sequence spans 367 residues: DNA replication and repair protein RecF (367 aa).

30–37 (GENAQGKT) is an ATP binding site.

It belongs to the RecF family.

It localises to the cytoplasm. Its function is as follows. The RecF protein is involved in DNA metabolism; it is required for DNA replication and normal SOS inducibility. RecF binds preferentially to single-stranded, linear DNA. It also seems to bind ATP. This is DNA replication and repair protein RecF from Chlamydia caviae (strain ATCC VR-813 / DSM 19441 / 03DC25 / GPIC) (Chlamydophila caviae).